The primary structure comprises 410 residues: MMGKSVWVFAALFPAVLAADIYVSPDGSDDAAGTIDAPLQSIQLAVDQATAGSTIYLRGGTYTPTSNIQITKSGTASAPYVLRAYEGESVIIDGEELPGTPADLDASLDNADRGILHIQDAEYWEFYDLELINGPYGVYARDASNNHYERITTRNNYETGFQLQGESSNNVVLYLDSYGNRDPRKNGESADGFACKEGSGEGNILRGARLWNNVDDGLDLWYAVNPVHPRISANTSREFKSAVTIEDTIAWGNGFNRWDFTPFEGDGNGFKLGGGDDTDIGPADHIITNCIAFSNAKDGFTDNSQPGNFVLTRNTAWDNTAVGFKFGTAVATLTGNIAASNGEAPTSLSDEQISDGNSWDGDEDWDDGSFVSVDVSLVQGERNADGTIEPSGFLLPADGEEIGATTDWSA.

A signal peptide spans 1–18 (MMGKSVWVFAALFPAVLA). Ca(2+) contacts are provided by aspartate 191, aspartate 215, aspartate 216, and aspartate 219. A glycan (N-linked (GlcNAc...) asparagine) is linked at asparagine 234. The Proton acceptor role is filled by lysine 271. The segment covering 342–351 (GEAPTSLSDE) has biased composition (polar residues). Disordered stretches follow at residues 342–361 (GEAP…SWDG) and 381–410 (ERNA…DWSA).

Belongs to the polysaccharide lyase 9 family. Ca(2+) serves as cofactor.

It localises to the secreted. It catalyses the reaction Eliminative cleavage of (1-&gt;4)-alpha-D-galacturonan to give oligosaccharides with 4-deoxy-alpha-D-galact-4-enuronosyl groups at their non-reducing ends.. With respect to regulation, inhibited by iron ions. Activated in presence of the surfactant polysorbate 20, while inhibited in the presence of Triton X-100 and sodium dodecyl sulfate. Inhibited in presence of the organic solvents methanol, ethanol, propan-2-ol and acetone. Its function is as follows. Presents an endo-cleaving activity on the homogalacturonan (HG) region in pectin. Active on homogalacturonan with a degree of polymerization above 4, and does not appear to be affected by the degree of methylation of the substrate. Does not degrade linear rhamnogalacturonan. The sequence is that of Pectate lyase PEL9 from Emericella nidulans (strain FGSC A4 / ATCC 38163 / CBS 112.46 / NRRL 194 / M139) (Aspergillus nidulans).